Here is a 191-residue protein sequence, read N- to C-terminus: uncharacterized protein (191 aa).

This is an uncharacterized protein from Archaeoglobus fulgidus (strain ATCC 49558 / DSM 4304 / JCM 9628 / NBRC 100126 / VC-16).